The chain runs to 473 residues: Photosystem II CP43 reaction center protein (473 aa).

A propeptide spanning residues Met1–Glu14 is cleaved from the precursor. Thr15 carries the post-translational modification N-acetylthreonine. Thr15 carries the post-translational modification Phosphothreonine. 5 helical membrane-spanning segments follow: residues Leu69 to Ala93, Leu134 to Asn155, Lys178 to Thr200, Lys255 to Ser275, and Trp291 to Ala312. Glu367 lines the [CaMn4O5] cluster pocket. The helical transmembrane segment at Arg447–Pro471 threads the bilayer.

The protein belongs to the PsbB/PsbC family. PsbC subfamily. As to quaternary structure, PSII is composed of 1 copy each of membrane proteins PsbA, PsbB, PsbC, PsbD, PsbE, PsbF, PsbH, PsbI, PsbJ, PsbK, PsbL, PsbM, PsbT, PsbX, PsbY, PsbZ, Psb30/Ycf12, at least 3 peripheral proteins of the oxygen-evolving complex and a large number of cofactors. It forms dimeric complexes. It depends on Binds multiple chlorophylls and provides some of the ligands for the Ca-4Mn-5O cluster of the oxygen-evolving complex. It may also provide a ligand for a Cl- that is required for oxygen evolution. PSII binds additional chlorophylls, carotenoids and specific lipids. as a cofactor.

The protein resides in the plastid. It localises to the chloroplast thylakoid membrane. One of the components of the core complex of photosystem II (PSII). It binds chlorophyll and helps catalyze the primary light-induced photochemical processes of PSII. PSII is a light-driven water:plastoquinone oxidoreductase, using light energy to abstract electrons from H(2)O, generating O(2) and a proton gradient subsequently used for ATP formation. The protein is Photosystem II CP43 reaction center protein of Capsella bursa-pastoris (Shepherd's purse).